A 1343-amino-acid polypeptide reads, in one-letter code: Protein cordon-bleu (1343 aa).

Disordered stretches follow at residues 1-51 (MNLG…GDCK), 301-479 (KVEL…PAAE), 522-613 (VSVA…NGYE), 733-808 (IDKP…TRVL), 1056-1077 (EKPT…KSLD), and 1105-1148 (INNF…NVFG). Over residues 20–30 (APPPPRPPQPA) the composition is skewed to pro residues. A KKRRAP 1 motif is present at residues 305–310 (KKRRAP). Residues 324–335 (SQISLGSPSSHN) show a composition bias toward polar residues. Residues 338-343 (KKRKAP) carry the KKRRAP 2 motif. Residues 343–354 (PAPPPTPPPSTP) show a composition bias toward pro residues. A compositionally biased stretch (basic and acidic residues) spans 390 to 400 (DLSHSIEDSEP). Positions 406–422 (SSSSGDDAAAVGSSSSS) are enriched in low complexity. Positions 445–460 (PEPKPEYEPELKKEAS) are enriched in basic and acidic residues. Residues 552 to 573 (ERMQSVSPMDIMSLNSDSTLPV) are compositionally biased toward polar residues. Positions 746–757 (PSQDAKITDNME) are enriched in basic and acidic residues. Positions 773-789 (VELTSQKDTVLQKSQSF) are enriched in polar residues. Residues 1105–1122 (INNFPDTSSARQTPTDTT) show a composition bias toward polar residues. Over residues 1128 to 1137 (KKPELHKSEI) the composition is skewed to basic and acidic residues. 2 consecutive WH2 domains span residues 1167 to 1187 (IHSS…LRKV) and 1207 to 1227 (ERSA…LKKT). A disordered region spans residues 1246-1297 (NVHTEVISPRPTSPDFVPPLPPSFSPPPPPPPPLAPAKPPVVLPPGGNPEAA). Residues 1261-1292 (FVPPLPPSFSPPPPPPPPLAPAKPPVVLPPGG) are compositionally biased toward pro residues. The WH2 3 domain occupies 1297 to 1317 (AREALLEAIRSGSGAQQLRKV).

As to quaternary structure, interacts with pacsin1.

The protein localises to the cell membrane. Its subcellular location is the cytoplasm. It localises to the cytoskeleton. It is found in the cell projection. The protein resides in the ruffle. The protein localises to the cytosol. Its function is as follows. Plays an important role in the reorganization of the actin cytoskeleton. Binds to and sequesters actin monomers (G actin). Nucleates actin polymerization by assembling three actin monomers in cross-filament orientation and thereby promotes growth of actin filaments at the barbed end. Can also mediate actin depolymerization at barbed ends and severing of actin filaments. Promotes formation of cell ruffles. Regulates neuron morphogenesis and increases branching of axons and dendrites. Required for normal embryonic development, including normal development of laterality, normal body size and shape, as well as normal brain, heart and kidney development. Required for normal development of stereocilia and kinocilia in sensory hair cells of neuromasts in the posterior lateral line organ, and thus also for balance keeping and normal swimming behavior. This chain is Protein cordon-bleu (cobl), found in Danio rerio (Zebrafish).